A 220-amino-acid chain; its full sequence is Guanylate kinase (220 aa).

The 180-residue stretch at G16–R195 folds into the Guanylate kinase-like domain. S23 to T30 serves as a coordination point for ATP.

Belongs to the guanylate kinase family.

It localises to the cytoplasm. The catalysed reaction is GMP + ATP = GDP + ADP. Functionally, essential for recycling GMP and indirectly, cGMP. This chain is Guanylate kinase, found in Rhodopseudomonas palustris (strain HaA2).